A 346-amino-acid polypeptide reads, in one-letter code: MKTKEFHFNLPYSLIAQYPSEKRGSSRLMVLDPKLQKIYHENSVNNILKYINSDTFIVFNNSKVRKSRMYAESEMGSNVEFLILDRIGTDLFTALISKSKKQIVGNVYKFPEGLMGKILSKNSSEIVLKFNDDVREDYFEKHGFVPIPPYIKRDYDKIDEDRYQTIYSKYVGSAASATAGLHFSRDLFSAFEKNNIEYDFITLHVGLGTFLPVRSKKVEEHNMHFETFLIKDCVANRLENAKFLGKKVLSIGTTTLRALESSYDNKLKKFKTGQQSTNLFIYPGKNYCFKFVDMLFTNFHTPQSTLLMLVSAFAGKDFVFSSYEEGINKGYKFFSYGDAMLVLNHI.

The protein belongs to the QueA family. As to quaternary structure, monomer.

Its subcellular location is the cytoplasm. The enzyme catalyses 7-aminomethyl-7-carbaguanosine(34) in tRNA + S-adenosyl-L-methionine = epoxyqueuosine(34) in tRNA + adenine + L-methionine + 2 H(+). It participates in tRNA modification; tRNA-queuosine biosynthesis. Functionally, transfers and isomerizes the ribose moiety from AdoMet to the 7-aminomethyl group of 7-deazaguanine (preQ1-tRNA) to give epoxyqueuosine (oQ-tRNA). The sequence is that of S-adenosylmethionine:tRNA ribosyltransferase-isomerase from Borreliella afzelii (strain PKo) (Borrelia afzelii).